The following is a 170-amino-acid chain: Photosystem I assembly protein Ycf3 (170 aa).

TPR repeat units lie at residues 35 to 69, 73 to 106, and 121 to 154; these read AFTYYRDGVMSAQSEGEYAEALQNYYEAMRPEIDP, SYILYNIGLIHMSNGEHTEALEYYFQALKRNPSL, and GEQAIRQGDPETAEAWSDRAAEYWKQAIALAPGN.

Belongs to the Ycf3 family.

The protein localises to the plastid. It is found in the chloroplast thylakoid membrane. Functionally, essential for the assembly of the photosystem I (PSI) complex. May act as a chaperone-like factor to guide the assembly of the PSI subunits. The protein is Photosystem I assembly protein Ycf3 of Cycas taitungensis (Prince sago).